Here is a 186-residue protein sequence, read N- to C-terminus: Nucleoside triphosphate pyrophosphatase (186 aa).

Aspartate 68 serves as the catalytic Proton acceptor.

It belongs to the Maf family. A divalent metal cation serves as cofactor.

The protein localises to the cytoplasm. The catalysed reaction is a ribonucleoside 5'-triphosphate + H2O = a ribonucleoside 5'-phosphate + diphosphate + H(+). It carries out the reaction a 2'-deoxyribonucleoside 5'-triphosphate + H2O = a 2'-deoxyribonucleoside 5'-phosphate + diphosphate + H(+). Functionally, nucleoside triphosphate pyrophosphatase. May have a dual role in cell division arrest and in preventing the incorporation of modified nucleotides into cellular nucleic acids. The sequence is that of Nucleoside triphosphate pyrophosphatase from Prochlorococcus marinus (strain MIT 9303).